Here is a 136-residue protein sequence, read N- to C-terminus: Cytidine deaminase (136 aa).

Residues 1–128 (MDVEKLIAES…KLLPGAFSKE (128 aa)) form the CMP/dCMP-type deaminase domain. A substrate-binding site is contributed by 42–44 (NIE). C53 serves as a coordination point for Zn(2+). E55 functions as the Proton donor in the catalytic mechanism. Positions 86 and 89 each coordinate Zn(2+).

It belongs to the cytidine and deoxycytidylate deaminase family. Requires Zn(2+) as cofactor.

It catalyses the reaction cytidine + H2O + H(+) = uridine + NH4(+). The catalysed reaction is 2'-deoxycytidine + H2O + H(+) = 2'-deoxyuridine + NH4(+). Its function is as follows. This enzyme scavenges exogenous and endogenous cytidine and 2'-deoxycytidine for UMP synthesis. The chain is Cytidine deaminase (cdd) from Sporosarcina psychrophila (Bacillus psychrophilus).